Reading from the N-terminus, the 324-residue chain is PDZ domain-containing protein MAGIX (324 aa).

The segment at 1 to 26 is disordered; sequence MDSRAGNTADPRGGRRGGGLQGSRSP. One can recognise a PDZ domain in the interval 128-212; the sequence is SVELTRGPAG…HLCLVLQRPQ (85 aa). Residues 216–241 are compositionally biased toward basic and acidic residues; it reads GSRIKEVGGHRKTDRSLDPRGSRVES. The tract at residues 216-263 is disordered; the sequence is GSRIKEVGGHRKTDRSLDPRGSRVESRSTISPVHHRPKTRTSPRPSPE. Residue Ser-261 is modified to Phosphoserine.

In Mus musculus (Mouse), this protein is PDZ domain-containing protein MAGIX (Magix).